The following is a 307-amino-acid chain: UDP-3-O-acyl-N-acetylglucosamine deacetylase (307 aa).

Positions 78, 241, and 245 each coordinate Zn(2+). Catalysis depends on H268, which acts as the Proton donor.

The protein belongs to the LpxC family. It depends on Zn(2+) as a cofactor.

It catalyses the reaction a UDP-3-O-[(3R)-3-hydroxyacyl]-N-acetyl-alpha-D-glucosamine + H2O = a UDP-3-O-[(3R)-3-hydroxyacyl]-alpha-D-glucosamine + acetate. The protein operates within glycolipid biosynthesis; lipid IV(A) biosynthesis; lipid IV(A) from (3R)-3-hydroxytetradecanoyl-[acyl-carrier-protein] and UDP-N-acetyl-alpha-D-glucosamine: step 2/6. Functionally, catalyzes the hydrolysis of UDP-3-O-myristoyl-N-acetylglucosamine to form UDP-3-O-myristoylglucosamine and acetate, the committed step in lipid A biosynthesis. The polypeptide is UDP-3-O-acyl-N-acetylglucosamine deacetylase (Polaromonas naphthalenivorans (strain CJ2)).